The primary structure comprises 107 residues: DNA polymerase delta subunit 4 (107 aa).

The short motif at M1–R16 is the PCNA-interaction protein motif (PIP box) element. The tract at residues M1–E35 is disordered. Positions K15–L28 are enriched in basic and acidic residues.

This sequence belongs to the DNA polymerase delta subunit 4 family. As to quaternary structure, component of the tetrameric DNA polymerase delta complex (Pol-delta4), which consists of POLD1/p125, POLD2/p50, POLD3/p66/p68 and POLD4/p12, with POLD1 bearing DNA polymerase and 3' to 5' proofreading exonuclease activities. Within this complex, directly interacts with POLD1 and POLD2. Directly interacts with PCNA, as do POLD1 and POLD3; this interaction stimulates Pol-delta4 polymerase activity. As POLD1 and POLD2, directly interacts with WRNIP1; this interaction stimulates DNA polymerase delta-mediated DNA synthesis, independently of the presence of PCNA, possibly by increasing initiation frequency. Upon genotoxic stress induced by DNA damaging agents or by replication stress, POLD4 is proteolytically degraded and Pol-delta4 is converted into a trimeric form of the complex (Pol-delta3) that has an increased proofreading activity. The DNA polymerase delta complex interacts with POLDIP2; this interaction is probably mediated through direct binding to POLD2. Post-translationally, ubiquitinated; undergoes 'Lys-48'-linked ubiquitination in response to UV irradiation, leading to proteasomal degradation. This modification is partly mediated by RNF8 and by the DCX(DTL) E3 ubiquitin ligase complex (also called CRL4(CDT2)). Efficient degradation requires the presence of PCNA and is required for the inhibition of fork progression after DNA damage.

The protein localises to the nucleus. Its function is as follows. As a component of the tetrameric DNA polymerase delta 4 complex (Pol-delta4), plays a role in high fidelity genome replication and repair. Within this complex, increases the rate of DNA synthesis and decreases fidelity by regulating POLD1 polymerase and proofreading 3' to 5' exonuclease activity. Pol-delta4 participates in Okazaki fragment processing, through both the short flap pathway, as well as a nick translation system. Under conditions of DNA replication stress, required for the repair of broken replication forks through break-induced replication (BIR), a mechanism that may induce segmental genomic duplications of up to 200 kb. Involved in Pol-delta4 translesion synthesis (TLS) of templates carrying O6-methylguanine or abasic sites. Its degradation in response to DNA damage is required for the inhibition of fork progression and cell survival. The protein is DNA polymerase delta subunit 4 (POLD4) of Bos taurus (Bovine).